The following is a 560-amino-acid chain: Protein DETOXIFICATION 45, chloroplastic (560 aa).

The N-terminal 75 residues, 1–75 (MESSRVVVGG…QTNPDCGVVK (75 aa)), are a transit peptide targeting the chloroplast. The next 12 helical transmembrane spans lie at 109-129 (LVML…TLLM), 147-167 (VSMA…LSVA), 209-229 (ALVL…LASG), 250-270 (FLVL…LQGI), 280-300 (PVYC…LFIY), 308-328 (GAAI…LILL), 353-373 (FVLG…SMAA), 389-411 (VWLA…IASS), 426-446 (FVLK…GMSF), 466-486 (GVLF…FDGL), 495-515 (YAAC…LYAP), and 523-543 (VWVG…SRLM).

The protein belongs to the multi antimicrobial extrusion (MATE) (TC 2.A.66.1) family. In terms of tissue distribution, ubiquitous.

It localises to the plastid. The protein localises to the chloroplast membrane. This Arabidopsis thaliana (Mouse-ear cress) protein is Protein DETOXIFICATION 45, chloroplastic.